The following is a 166-amino-acid chain: Short form salivary protein D7R1 (166 aa).

An N-terminal signal peptide occupies residues 1 to 21 (MFRKVFSVALVTCGLLVIVQA).

The protein belongs to the PBP/GOBP family. As to quaternary structure, interacts with host coagulation factor XII (F12) (inactive and activated) (via amino acids 1-77). Interacts with host high molecular weight kininogen (KNG1) (via amino acids 402-532). As to expression, female salivary gland (at protein level).

Its subcellular location is the secreted. With respect to regulation, zn(2+) modulates binding to host coagulation factor XII (F12) and high molecular weight kininogen (KNG1). In terms of biological role, salivary protein with anticoagulant activity that targets the intrinsic blood coagulation pathway in the host. Inhibits activation of the host plasma contact system by preventing the reciprocal activation of host coagulation factor XII (F12) and prekallikrein (KLKB1). Attenuates generation of bradykinin in host plasma. May bind and sequester different mediators involved in the host response, such as serotonin and histamine. The protein is Short form salivary protein D7R1 of Anopheles stephensi (Indo-Pakistan malaria mosquito).